Reading from the N-terminus, the 532-residue chain is 2,3-bisphosphoglycerate-independent phosphoglycerate mutase (532 aa).

Residues aspartate 15 and serine 65 each coordinate Mn(2+). Serine 65 serves as the catalytic Phosphoserine intermediate. Substrate is bound by residues histidine 126, 156–157, arginine 188, arginine 194, 258–261, and lysine 331; these read RD and RPDR. Positions 398, 402, 439, 440, and 457 each coordinate Mn(2+).

It belongs to the BPG-independent phosphoglycerate mutase family. Monomer. The cofactor is Mn(2+).

It catalyses the reaction (2R)-2-phosphoglycerate = (2R)-3-phosphoglycerate. Its pathway is carbohydrate degradation; glycolysis; pyruvate from D-glyceraldehyde 3-phosphate: step 3/5. Its function is as follows. Catalyzes the interconversion of 2-phosphoglycerate and 3-phosphoglycerate. This Cyanothece sp. (strain PCC 7425 / ATCC 29141) protein is 2,3-bisphosphoglycerate-independent phosphoglycerate mutase.